Here is a 585-residue protein sequence, read N- to C-terminus: Staphyloferrin A synthase (585 aa).

The protein belongs to the IucA/IucC family.

The enzyme catalyses N(5)-[(S)-citryl]-D-ornithine + citrate + ATP = staphyloferrin A + AMP + diphosphate + H(+). It participates in siderophore biosynthesis. Functionally, involved in the biosynthesis of the siderophore staphyloferrin A. Catalyzes the ATP-dependent condensation of a citryl-D-ornithine intermediate, produced by SfnaD, and citrate to form staphyloferrin A. This is Staphyloferrin A synthase from Staphylococcus aureus (strain NCTC 8325 / PS 47).